Here is a 375-residue protein sequence, read N- to C-terminus: Peptide-N(4)-(N-acetyl-beta-glucosaminyl)asparagine amidase (375 aa).

4 residues coordinate Zn(2+): Cys129, Cys132, Cys163, and Cys166. Cys189 (nucleophile) is an active-site residue. Residues His219 and Asp236 contribute to the active site. Glu239 provides a ligand contact to substrate. Positions 345 to 375 (KIEVSRTHNIPTGRQTGDAEWTKSRGEDGNE) are disordered. Positions 364-375 (EWTKSRGEDGNE) are enriched in basic and acidic residues.

This sequence belongs to the transglutaminase-like superfamily. PNGase family. Zn(2+) is required as a cofactor.

The protein resides in the cytoplasm. It catalyses the reaction Hydrolysis of an N(4)-(acetyl-beta-D-glucosaminyl)asparagine residue in which the glucosamine residue may be further glycosylated, to yield a (substituted) N-acetyl-beta-D-glucosaminylamine and a peptide containing an aspartate residue.. Its function is as follows. Specifically deglycosylates the denatured form of N-linked glycoproteins in the cytoplasm and assists their proteasome-mediated degradation. Cleaves the beta-aspartyl-glucosamine (GlcNAc) of the glycan and the amide side chain of Asn, converting Asn to Asp. Prefers proteins containing high-mannose over those bearing complex type oligosaccharides. Can recognize misfolded proteins in the endoplasmic reticulum that are exported to the cytosol to be destroyed and deglycosylate them, while it has no activity toward native proteins. Deglycosylation is a prerequisite for subsequent proteasome-mediated degradation of some, but not all, misfolded glycoproteins. In Debaryomyces hansenii (strain ATCC 36239 / CBS 767 / BCRC 21394 / JCM 1990 / NBRC 0083 / IGC 2968) (Yeast), this protein is Peptide-N(4)-(N-acetyl-beta-glucosaminyl)asparagine amidase (PNG1).